We begin with the raw amino-acid sequence, 338 residues long: Protein RecA (338 aa).

68-75 provides a ligand contact to ATP; sequence GPESSGKT.

It belongs to the RecA family.

The protein localises to the cytoplasm. Its function is as follows. Can catalyze the hydrolysis of ATP in the presence of single-stranded DNA, the ATP-dependent uptake of single-stranded DNA by duplex DNA, and the ATP-dependent hybridization of homologous single-stranded DNAs. It interacts with LexA causing its activation and leading to its autocatalytic cleavage. The polypeptide is Protein RecA (Citrifermentans bemidjiense (strain ATCC BAA-1014 / DSM 16622 / JCM 12645 / Bem) (Geobacter bemidjiensis)).